The following is a 120-amino-acid chain: MNVQAIIKDIESEYLKTDLPTIHVGDTVRVGVRIREGGKERVQPYEGTVIAMRNGGINETITVRRVFQGVGVERVFLLHSPRVADIKVVRRGKVRRAKLYYLRNRVGKATRIRQRFDRPV.

The protein belongs to the bacterial ribosomal protein bL19 family.

In terms of biological role, this protein is located at the 30S-50S ribosomal subunit interface and may play a role in the structure and function of the aminoacyl-tRNA binding site. The polypeptide is Large ribosomal subunit protein bL19 (Crocosphaera subtropica (strain ATCC 51142 / BH68) (Cyanothece sp. (strain ATCC 51142))).